Consider the following 238-residue polypeptide: MNDVITAEFDENGRAIRRIRSFVRRQGRLTKGQQLALDEYWPLMGVEFTPEALDLPTLFGREAPVVLEIGFGMGASLVAMAQQHPERDFLGIEVHSPGVGACLSSAHEAGVNNLRVMCHDAVEVLERMIPDASLDMVQLFFPDPWHKARHHKRRIVQSAFAGRIRGKLKISGVFHMATDWENYAEHMLEVMNHAPGYRNLSDDNTYVPRPDSRPVTKFELRGQRLGHGNWDLMFERVE.

The S-adenosyl-L-methionine site is built by Glu68, Glu93, Asp120, and Asp143. The active site involves Asp143. Residues Lys147, Asp179, and 216–219 (TKFE) each bind substrate.

It belongs to the class I-like SAM-binding methyltransferase superfamily. TrmB family. As to quaternary structure, monomer.

The catalysed reaction is guanosine(46) in tRNA + S-adenosyl-L-methionine = N(7)-methylguanosine(46) in tRNA + S-adenosyl-L-homocysteine. The protein operates within tRNA modification; N(7)-methylguanine-tRNA biosynthesis. Its function is as follows. Catalyzes the formation of N(7)-methylguanine at position 46 (m7G46) in tRNA. This Edwardsiella ictaluri (strain 93-146) protein is tRNA (guanine-N(7)-)-methyltransferase.